Reading from the N-terminus, the 672-residue chain is MSKAFKLTSKFKPSGDQPQAIEKLVAGLEDGLAYQTLLGVTGSGKTFTIANAIEKVQRPTLILEPNKTLAAQFYAEMREFFPENAVEYFVSYYDYYQPEAYVPSSDTYIEKDASINDHIEQMRLSATKAITERHDTIIIATVSAIYGLGDPDSYLKMLLHLTRGDQIDQRKILQRLAELQYTRNDLELRRATYRVNGDIIDIYPADSEREAVRVELFDDEVENLSYFDPLTGEMLRRVPRITVYPKTHYVTPREKLLSTLDQIKIELKERLSQLEKANKLVERQRLEQRTKFDMEMILELGYCSGIENYSRYLSGRNEGEPPPTLIDYLPKDALLIIDESHVTIPQLGGMYRGDRARKETLVEYGFRLPSALDNRPLRFDEFEKLAPQTIFISATPGPYEEKQSDQVVELLVRPTGLIDPEIEVRPVATQVDDLLSEIKKRAAQNERVLVTTLTKRMAEDLTEYFTEHNVRVRYLHSDIDTVERVEIIRDLRLGVFDVLVGINLLREGLDIPEVSLVAILDADKEGFLRSERSLIQTMGRAARNVHGKAILYADRITDSMKRAMEEAERRRIAQSAYNEKHHITPKSIQKAVTEIIEGARTYTERGRFVNQAQLIAEEESKYIAMTPKQLAKELRKLEEQMYHHARNLEFEEAAAVRDKIQHIRKGLLEVKE.

Positions 26–181 (AGLEDGLAYQ…ILQRLAELQY (156 aa)) constitute a Helicase ATP-binding domain. 39–46 (GVTGSGKT) serves as a coordination point for ATP. The Beta-hairpin signature appears at 92-115 (YYDYYQPEAYVPSSDTYIEKDASI). A Helicase C-terminal domain is found at 430–592 (QVDDLLSEIK…ITPKSIQKAV (163 aa)). The UVR domain occupies 631-666 (AKELRKLEEQMYHHARNLEFEEAAAVRDKIQHIRKG).

This sequence belongs to the UvrB family. In terms of assembly, forms a heterotetramer with UvrA during the search for lesions. Interacts with UvrC in an incision complex.

It localises to the cytoplasm. The UvrABC repair system catalyzes the recognition and processing of DNA lesions. A damage recognition complex composed of 2 UvrA and 2 UvrB subunits scans DNA for abnormalities. Upon binding of the UvrA(2)B(2) complex to a putative damaged site, the DNA wraps around one UvrB monomer. DNA wrap is dependent on ATP binding by UvrB and probably causes local melting of the DNA helix, facilitating insertion of UvrB beta-hairpin between the DNA strands. Then UvrB probes one DNA strand for the presence of a lesion. If a lesion is found the UvrA subunits dissociate and the UvrB-DNA preincision complex is formed. This complex is subsequently bound by UvrC and the second UvrB is released. If no lesion is found, the DNA wraps around the other UvrB subunit that will check the other stand for damage. In Coxiella burnetii (strain Dugway 5J108-111), this protein is UvrABC system protein B.